Consider the following 745-residue polypeptide: Multiple C2 domain and transmembrane region protein 13 (745 aa).

The interval 1-30 is disordered; that stretch reads MAANKDEFSVKQISPKLGGERGARNPYGPT. C2 domains are found at residues 21–139, 171–293, and 326–453; these read RGAR…PQRY, DASE…SAPA, and AEES…ACSY. The Ca(2+) site is built by D56, D61, D106, and N110. A run of 2 helical transmembrane segments spans residues 568 to 588 and 688 to 708; these read SLIV…LVGL and FYCW…PMWL.

Belongs to the MCTP family. It depends on Ca(2+) as a cofactor. In terms of tissue distribution, expressed in incipient leaf primordia.

It is found in the cell membrane. Its subcellular location is the cytoplasm. In terms of biological role, may function as a signaling molecule by regulating the trafficking of other regulators. This Arabidopsis thaliana (Mouse-ear cress) protein is Multiple C2 domain and transmembrane region protein 13.